Here is a 138-residue protein sequence, read N- to C-terminus: Cysteine desulfuration protein SufE (138 aa).

Cys51 functions as the Cysteine persulfide intermediate in the catalytic mechanism.

It belongs to the SufE family. Homodimer. Interacts with SufS.

The protein localises to the cytoplasm. The protein operates within cofactor biosynthesis; iron-sulfur cluster biosynthesis. Participates in cysteine desulfuration mediated by SufS. Cysteine desulfuration mobilizes sulfur from L-cysteine to yield L-alanine and constitutes an essential step in sulfur metabolism for biosynthesis of a variety of sulfur-containing biomolecules. Functions as a sulfur acceptor for SufS, by mediating the direct transfer of the sulfur atom from the S-sulfanylcysteine of SufS, an intermediate product of cysteine desulfuration process. This is Cysteine desulfuration protein SufE from Salmonella choleraesuis (strain SC-B67).